The sequence spans 618 residues: Zinc finger protein 48 (618 aa).

The residue at position 1 (Met1) is an N-acetylmethionine. Composition is skewed to basic and acidic residues over residues 1-22 (MERAVEPWGPDLHRPEEREPQR) and 39-51 (EFEHTPQEDDLGF). 2 disordered regions span residues 1 to 51 (MERA…DLGF) and 78 to 109 (LWVQREGLGKPQPRDRGPRLLGEPRWGQASSD). Residue Lys87 forms a Glycyl lysine isopeptide (Lys-Gly) (interchain with G-Cter in SUMO2) linkage. 2 C2H2-type zinc fingers span residues 112–134 (AVCGECGKSFRQMSDLVKHQRTH) and 140–162 (YKCGVCGKGFGDSSARIKHQRTH). The interval 157–189 (KHQRTHSGEKPYRARPPAQGPPKIPRSRIPAGE) is disordered. Lys179 is covalently cross-linked (Glycyl lysine isopeptide (Lys-Gly) (interchain with G-Cter in SUMO2)). C2H2-type zinc fingers lie at residues 192 to 214 (TICGECGKSFRQSSDLVKHQRTH) and 220 to 242 (YKCGICGKGFGDSSARIKHQRTH). The interval 235–271 (RIKHQRTHRGEQPPRPVVPRRQPSRAATAATQGPKAQ) is disordered. Lys269 is covalently cross-linked (Glycyl lysine isopeptide (Lys-Gly) (interchain with G-Cter in SUMO2)). 2 consecutive C2H2-type zinc fingers follow at residues 275–297 (YICTDCGKRFVLSCSLLSHQRSH) and 303–325 (FGCDVCGKEFARGSDLVKHLRVH). A Glycyl lysine isopeptide (Lys-Gly) (interchain with G-Cter in SUMO2) cross-link involves residue Lys329. 2 C2H2-type zinc fingers span residues 331–353 (YLCPECGKGFADSSARVKHLRTH) and 359–381 (HACPECDRTFSLSSTLLRHRLTH). The span at 392 to 414 (YPLPALIPSPPPPPLGTSPPLTP) shows a compositional bias: pro residues. Residues 392 to 457 (YPLPALIPSP…DKPHKCPECG (66 aa)) form a disordered region. The span at 415 to 432 (RSPSHSGEPFGLPGLEPE) shows a compositional bias: low complexity. Residues 451 to 473 (HKCPECGKGFRRSSDLVKHHRVH) form a C2H2-type 9 zinc finger. Lys477 is covalently cross-linked (Glycyl lysine isopeptide (Lys-Gly) (interchain with G-Cter in SUMO2)). A C2H2-type 10 zinc finger spans residues 479–501 (YLCPECGKGFADSSARVKHLRTH). The interval 500–540 (THRGERARPPPPSTLLRPHNPPGPVPMAPRPRVRAQPSGPS) is disordered. The span at 508–528 (PPPPSTLLRPHNPPGPVPMAP) shows a compositional bias: pro residues. 2 consecutive C2H2-type zinc fingers follow at residues 543–565 (HVCGFCGKEFPRSSDLVKHRRTH) and 571–593 (YKCAECGKGFGDSSARIKHQRGH). Lys610 is covalently cross-linked (Glycyl lysine isopeptide (Lys-Gly) (interchain with G-Cter in SUMO2)).

Belongs to the krueppel C2H2-type zinc-finger protein family.

The protein resides in the nucleus. Its function is as follows. May be involved in transcriptional regulation. The protein is Zinc finger protein 48 (ZNF48) of Homo sapiens (Human).